We begin with the raw amino-acid sequence, 664 residues long: Bifunctional 3-dehydroquinate synthase/phosphatase (664 aa).

A 3-dehydroquinate synthase region spans residues 1–352; sequence MKKIFDDIYV…KIIDKYKNNF (352 aa). Residues 61–66, 95–99, 119–120, lysine 132, lysine 141, and 159–162 contribute to the NAD(+) site; these read DGEEYK, GVICD, TS, and FLKT. Zn(2+) contacts are provided by glutamate 174, histidine 238, and histidine 255. The interval 353–664 is GPPA/PPX; that stretch reads LRASIDIGTN…GAILEGVENK (312 aa).

It in the N-terminal section; belongs to the sugar phosphate cyclases superfamily. Dehydroquinate synthase family. In the C-terminal section; belongs to the GppA/Ppx family. As to quaternary structure, monomer. It depends on NAD(+) as a cofactor. Requires Co(2+) as cofactor. Zn(2+) is required as a cofactor.

It localises to the cytoplasm. It carries out the reaction 7-phospho-2-dehydro-3-deoxy-D-arabino-heptonate = 3-dehydroquinate + phosphate. The protein operates within metabolic intermediate biosynthesis; chorismate biosynthesis; chorismate from D-erythrose 4-phosphate and phosphoenolpyruvate: step 2/7. This is Bifunctional 3-dehydroquinate synthase/phosphatase (aroB) from Fusobacterium nucleatum subsp. nucleatum (strain ATCC 25586 / DSM 15643 / BCRC 10681 / CIP 101130 / JCM 8532 / KCTC 2640 / LMG 13131 / VPI 4355).